Reading from the N-terminus, the 466-residue chain is Glutamate decarboxylase alpha (466 aa).

Residues Thr62 and Asn83 each contribute to the substrate site. Residues 126–127 (SS), Thr212, and His275 contribute to the pyridoxal 5'-phosphate site. N6-(pyridoxal phosphate)lysine is present on Lys276.

This sequence belongs to the group II decarboxylase family. As to quaternary structure, homohexamer. It depends on pyridoxal 5'-phosphate as a cofactor.

It carries out the reaction L-glutamate + H(+) = 4-aminobutanoate + CO2. Its function is as follows. Converts glutamate to gamma-aminobutyrate (GABA), consuming one intracellular proton in the reaction. The gad system helps to maintain a near-neutral intracellular pH when cells are exposed to extremely acidic conditions. The ability to survive transit through the acidic conditions of the stomach is essential for successful colonization of the mammalian host by commensal and pathogenic bacteria. This is Glutamate decarboxylase alpha (gadA) from Shigella flexneri.